Reading from the N-terminus, the 343-residue chain is MVMARKSDTLSEDVLPEDVRLEASLRPRSFDEYVGQGPVVEKLKVYVQAARSRGEALDHCLFSGPPGLGKTSLAHIIANELGVGIHVTSGPALERKGDLAGLLTNLDARDVLFIDEIHRLNAAVEEYLYPAMEDFRLDITIDTGPAARAMKIDLPPFTLIGATTRTGLLTSPLRDRFQIQERLEYYDAKALESILHRSARILGIPLDKDAAREVASRSRGTPRITNRLLRRLRDFAEVEGNGRITLELAQKSLDRLGVDASGLDSMDRKILLTILDKFGGGPVGVETIAASVGEQRDTIEDVYEPFLMQEGFLQRTPRGRMATHRTYQYFKKQPPPTPQGSLF.

The segment at 1–186 (MVMARKSDTL…FQIQERLEYY (186 aa)) is large ATPase domain (RuvB-L). Residues leucine 25, arginine 26, glycine 67, lysine 70, threonine 71, serine 72, 133 to 135 (EDF), arginine 176, tyrosine 186, and arginine 223 contribute to the ATP site. Threonine 71 lines the Mg(2+) pocket. Positions 187-257 (DAKALESILH…LAQKSLDRLG (71 aa)) are small ATPAse domain (RuvB-S). The head domain (RuvB-H) stretch occupies residues 260–343 (ASGLDSMDRK…PPPTPQGSLF (84 aa)). Positions 296, 315, and 320 each coordinate DNA.

This sequence belongs to the RuvB family. As to quaternary structure, homohexamer. Forms an RuvA(8)-RuvB(12)-Holliday junction (HJ) complex. HJ DNA is sandwiched between 2 RuvA tetramers; dsDNA enters through RuvA and exits via RuvB. An RuvB hexamer assembles on each DNA strand where it exits the tetramer. Each RuvB hexamer is contacted by two RuvA subunits (via domain III) on 2 adjacent RuvB subunits; this complex drives branch migration. In the full resolvosome a probable DNA-RuvA(4)-RuvB(12)-RuvC(2) complex forms which resolves the HJ.

Its subcellular location is the cytoplasm. It carries out the reaction ATP + H2O = ADP + phosphate + H(+). The RuvA-RuvB-RuvC complex processes Holliday junction (HJ) DNA during genetic recombination and DNA repair, while the RuvA-RuvB complex plays an important role in the rescue of blocked DNA replication forks via replication fork reversal (RFR). RuvA specifically binds to HJ cruciform DNA, conferring on it an open structure. The RuvB hexamer acts as an ATP-dependent pump, pulling dsDNA into and through the RuvAB complex. RuvB forms 2 homohexamers on either side of HJ DNA bound by 1 or 2 RuvA tetramers; 4 subunits per hexamer contact DNA at a time. Coordinated motions by a converter formed by DNA-disengaged RuvB subunits stimulates ATP hydrolysis and nucleotide exchange. Immobilization of the converter enables RuvB to convert the ATP-contained energy into a lever motion, pulling 2 nucleotides of DNA out of the RuvA tetramer per ATP hydrolyzed, thus driving DNA branch migration. The RuvB motors rotate together with the DNA substrate, which together with the progressing nucleotide cycle form the mechanistic basis for DNA recombination by continuous HJ branch migration. Branch migration allows RuvC to scan DNA until it finds its consensus sequence, where it cleaves and resolves cruciform DNA. The sequence is that of Holliday junction branch migration complex subunit RuvB from Myxococcus xanthus (strain DK1622).